The sequence spans 366 residues: Histidinol-phosphate aminotransferase 2 (366 aa).

Position 226 is an N6-(pyridoxal phosphate)lysine (Lys-226).

Belongs to the class-II pyridoxal-phosphate-dependent aminotransferase family. Histidinol-phosphate aminotransferase subfamily. Homodimer. Requires pyridoxal 5'-phosphate as cofactor.

The catalysed reaction is L-histidinol phosphate + 2-oxoglutarate = 3-(imidazol-4-yl)-2-oxopropyl phosphate + L-glutamate. It participates in amino-acid biosynthesis; L-histidine biosynthesis; L-histidine from 5-phospho-alpha-D-ribose 1-diphosphate: step 7/9. This Haemophilus influenzae (strain ATCC 51907 / DSM 11121 / KW20 / Rd) protein is Histidinol-phosphate aminotransferase 2 (hisC2).